We begin with the raw amino-acid sequence, 381 residues long: Chaperone protein DnaJ (381 aa).

Positions 4-69 constitute a J domain; sequence DYYEILGVAR…EKRARYDQFG (66 aa). A CR-type zinc finger spans residues 139 to 221; it reads GGEKELRVTR…CGGSGLVRKT (83 aa). Zn(2+) is bound by residues cysteine 152, cysteine 155, cysteine 169, cysteine 172, cysteine 195, cysteine 198, cysteine 209, and cysteine 212. CXXCXGXG motif repeat units lie at residues 152-159, 169-176, 195-202, and 209-216; these read CGHCHGNG, CPTCQGRG, CSTCRGEG, and CRECGGSG.

The protein belongs to the DnaJ family. Homodimer. Zn(2+) is required as a cofactor.

It is found in the cytoplasm. Participates actively in the response to hyperosmotic and heat shock by preventing the aggregation of stress-denatured proteins and by disaggregating proteins, also in an autonomous, DnaK-independent fashion. Unfolded proteins bind initially to DnaJ; upon interaction with the DnaJ-bound protein, DnaK hydrolyzes its bound ATP, resulting in the formation of a stable complex. GrpE releases ADP from DnaK; ATP binding to DnaK triggers the release of the substrate protein, thus completing the reaction cycle. Several rounds of ATP-dependent interactions between DnaJ, DnaK and GrpE are required for fully efficient folding. Also involved, together with DnaK and GrpE, in the DNA replication of plasmids through activation of initiation proteins. The polypeptide is Chaperone protein DnaJ (Carboxydothermus hydrogenoformans (strain ATCC BAA-161 / DSM 6008 / Z-2901)).